The sequence spans 819 residues: Probable cadmium/zinc-transporting ATPase HMA1, chloroplastic (819 aa).

A chloroplast-targeting transit peptide spans Met-1–Tyr-17. Topologically, residues Arg-18–Leu-122 are stromal. A compositionally biased stretch (basic and acidic residues) spans Asp-66–His-79. Residues Asp-66 to His-87 are disordered. A helical transmembrane segment spans residues Arg-123–Tyr-144. Residues Leu-145–Ser-153 are Lumenal-facing. Residues Leu-154–Asp-173 traverse the membrane as a helical segment. Over Ala-174 to Gly-180 the chain is Stromal. Residues Gly-181–Asn-201 form a helical membrane-spanning segment. A topological domain (lumenal) is located at residue Ala-202. Residues Leu-203–Thr-223 form a helical membrane-spanning segment. At Ser-224 to Glu-361 the chain is on the stromal side. Residues Phe-362–Leu-384 traverse the membrane as a helical segment. Topologically, residues Phe-385–Ser-398 are lumenal. A helical membrane pass occupies residues Val-399–Val-416. At Ala-417 to Val-737 the chain is on the stromal side. The active-site 4-aspartylphosphate intermediate is the Asp-453. Positions 682 and 686 each coordinate Mg(2+). Residues Lys-738 to Leu-757 traverse the membrane as a helical segment. Residues Gly-758–Leu-762 are Lumenal-facing. A helical transmembrane segment spans residues Trp-763–Val-781. Residues Arg-782–His-819 lie on the Stromal side of the membrane.

The protein belongs to the cation transport ATPase (P-type) (TC 3.A.3) family. Type IB subfamily.

Its subcellular location is the plastid. It is found in the chloroplast inner membrane. It carries out the reaction Zn(2+)(in) + ATP + H2O = Zn(2+)(out) + ADP + phosphate + H(+). It catalyses the reaction Cd(2+)(in) + ATP + H2O = Cd(2+)(out) + ADP + phosphate + H(+). In terms of biological role, involved in cadmium/zinc transport. This Arabidopsis thaliana (Mouse-ear cress) protein is Probable cadmium/zinc-transporting ATPase HMA1, chloroplastic (HMA1).